The following is a 323-amino-acid chain: Transaldolase (323 aa).

The active-site Schiff-base intermediate with substrate is K133.

It belongs to the transaldolase family. Type 1 subfamily. As to quaternary structure, monomer.

It carries out the reaction D-sedoheptulose 7-phosphate + D-glyceraldehyde 3-phosphate = D-erythrose 4-phosphate + beta-D-fructose 6-phosphate. It functions in the pathway carbohydrate degradation; pentose phosphate pathway; D-glyceraldehyde 3-phosphate and beta-D-fructose 6-phosphate from D-ribose 5-phosphate and D-xylulose 5-phosphate (non-oxidative stage): step 2/3. In terms of biological role, transaldolase important for the balance of metabolites in the pentose-phosphate pathway. Involved in xylose fermentation to ethanol. In Fusarium oxysporum f. sp. lycopersici (strain 4287 / CBS 123668 / FGSC 9935 / NRRL 34936) (Fusarium vascular wilt of tomato), this protein is Transaldolase.